The sequence spans 525 residues: EGF domain-specific O-linked N-acetylglucosamine transferase (525 aa).

Positions 1-24 are cleaved as a signal peptide; that stretch reads MVPLRLVLLLHIIHFSCENEVGSA. Residues 293–295 carry the Required for optimal activity motif; that stretch reads DYE. Asparagine 352 carries an N-linked (GlcNAc...) asparagine glycan. The short motif at 522–525 is the Prevents secretion from ER element; the sequence is RDEL.

Belongs to the glycosyltransferase 61 family.

The protein resides in the endoplasmic reticulum lumen. The catalysed reaction is L-seryl-[protein] + UDP-N-acetyl-alpha-D-glucosamine = 3-O-(N-acetyl-beta-D-glucosaminyl)-L-seryl-[protein] + UDP + H(+). The enzyme catalyses L-threonyl-[protein] + UDP-N-acetyl-alpha-D-glucosamine = 3-O-(N-acetyl-beta-D-glucosaminyl)-L-threonyl-[protein] + UDP + H(+). In terms of biological role, catalyzes the transfer of a single N-acetylglucosamine from UDP-GlcNAc to a serine or threonine residue in extracellular proteins resulting in their modification with a beta-linked N-acetylglucosamine (O-GlcNAc). Specifically glycosylates the Thr residue located between the fifth and sixth conserved cysteines of folded EGF-like domains. In Xenopus laevis (African clawed frog), this protein is EGF domain-specific O-linked N-acetylglucosamine transferase (eogt).